We begin with the raw amino-acid sequence, 218 residues long: ATP phosphoribosyltransferase (218 aa).

It belongs to the ATP phosphoribosyltransferase family. Short subfamily. Heteromultimer composed of HisG and HisZ subunits.

The protein resides in the cytoplasm. It carries out the reaction 1-(5-phospho-beta-D-ribosyl)-ATP + diphosphate = 5-phospho-alpha-D-ribose 1-diphosphate + ATP. It participates in amino-acid biosynthesis; L-histidine biosynthesis; L-histidine from 5-phospho-alpha-D-ribose 1-diphosphate: step 1/9. In terms of biological role, catalyzes the condensation of ATP and 5-phosphoribose 1-diphosphate to form N'-(5'-phosphoribosyl)-ATP (PR-ATP). Has a crucial role in the pathway because the rate of histidine biosynthesis seems to be controlled primarily by regulation of HisG enzymatic activity. This chain is ATP phosphoribosyltransferase, found in Burkholderia thailandensis (strain ATCC 700388 / DSM 13276 / CCUG 48851 / CIP 106301 / E264).